Reading from the N-terminus, the 725-residue chain is Catalase-peroxidase (725 aa).

The tryptophyl-tyrosyl-methioninium (Trp-Tyr) (with M-252) cross-link spans 98–226; it reads WHMAGSYRTS…LAAVQMGLIY (129 aa). Catalysis depends on His-99, which acts as the Proton acceptor. Residues 226–252 constitute a cross-link (tryptophyl-tyrosyl-methioninium (Tyr-Met) (with W-98)); sequence YVNPEGVNGKSDPQATAYQMRETFARM. His-267 lines the heme b pocket.

This sequence belongs to the peroxidase family. Peroxidase/catalase subfamily. Homodimer or homotetramer. Requires heme b as cofactor. Formation of the three residue Trp-Tyr-Met cross-link is important for the catalase, but not the peroxidase activity of the enzyme.

It carries out the reaction H2O2 + AH2 = A + 2 H2O. The enzyme catalyses 2 H2O2 = O2 + 2 H2O. Its function is as follows. Bifunctional enzyme with both catalase and broad-spectrum peroxidase activity. The protein is Catalase-peroxidase of Paracoccus denitrificans (strain Pd 1222).